Consider the following 330-residue polypeptide: Ribose-phosphate pyrophosphokinase (330 aa).

55 to 57 lines the ATP pocket; sequence DGE. 2 residues coordinate Mg(2+): His148 and Asp187. Lys211 is a catalytic residue. Residues Arg213, Asp237, and 241 to 245 each bind D-ribose 5-phosphate; that span reads DTGGT.

It belongs to the ribose-phosphate pyrophosphokinase family. Class I subfamily. As to quaternary structure, homohexamer. It depends on Mg(2+) as a cofactor.

Its subcellular location is the cytoplasm. The enzyme catalyses D-ribose 5-phosphate + ATP = 5-phospho-alpha-D-ribose 1-diphosphate + AMP + H(+). Its pathway is metabolic intermediate biosynthesis; 5-phospho-alpha-D-ribose 1-diphosphate biosynthesis; 5-phospho-alpha-D-ribose 1-diphosphate from D-ribose 5-phosphate (route I): step 1/1. Functionally, involved in the biosynthesis of the central metabolite phospho-alpha-D-ribosyl-1-pyrophosphate (PRPP) via the transfer of pyrophosphoryl group from ATP to 1-hydroxyl of ribose-5-phosphate (Rib-5-P). The polypeptide is Ribose-phosphate pyrophosphokinase (Nostoc sp. (strain PCC 7120 / SAG 25.82 / UTEX 2576)).